We begin with the raw amino-acid sequence, 634 residues long: Chaperone protein dnaK2 (634 aa).

Threonine 197 is modified (phosphothreonine; by autocatalysis). Positions 592–634 are disordered; sequence IGSSVYQQPGNQPPAPGTPDSNESNDKGGDDDVIDADFTETKD. A compositionally biased stretch (acidic residues) spans 622-634; it reads DDVIDADFTETKD.

This sequence belongs to the heat shock protein 70 family.

In terms of biological role, acts as a chaperone. The sequence is that of Chaperone protein dnaK2 (dnaK2) from Prochlorococcus marinus subsp. pastoris (strain CCMP1986 / NIES-2087 / MED4).